The primary structure comprises 119 residues: Large ribosomal subunit protein uL24 (119 aa).

Belongs to the universal ribosomal protein uL24 family. Part of the 50S ribosomal subunit.

Functionally, one of two assembly initiator proteins, it binds directly to the 5'-end of the 23S rRNA, where it nucleates assembly of the 50S subunit. Its function is as follows. Located at the polypeptide exit tunnel on the outside of the subunit. This Haloquadratum walsbyi (strain DSM 16790 / HBSQ001) protein is Large ribosomal subunit protein uL24.